The following is a 415-amino-acid chain: Serine--tRNA ligase (415 aa).

231–233 (TAE) lines the L-serine pocket. Residue 262 to 264 (RSE) coordinates ATP. Residue glutamate 285 participates in L-serine binding. 349-352 (EISS) lines the ATP pocket. Serine 383 is an L-serine binding site.

It belongs to the class-II aminoacyl-tRNA synthetase family. Type-1 seryl-tRNA synthetase subfamily. As to quaternary structure, homodimer. The tRNA molecule binds across the dimer.

It is found in the cytoplasm. The catalysed reaction is tRNA(Ser) + L-serine + ATP = L-seryl-tRNA(Ser) + AMP + diphosphate + H(+). The enzyme catalyses tRNA(Sec) + L-serine + ATP = L-seryl-tRNA(Sec) + AMP + diphosphate + H(+). Its pathway is aminoacyl-tRNA biosynthesis; selenocysteinyl-tRNA(Sec) biosynthesis; L-seryl-tRNA(Sec) from L-serine and tRNA(Sec): step 1/1. In terms of biological role, catalyzes the attachment of serine to tRNA(Ser). Is also able to aminoacylate tRNA(Sec) with serine, to form the misacylated tRNA L-seryl-tRNA(Sec), which will be further converted into selenocysteinyl-tRNA(Sec). The protein is Serine--tRNA ligase of Helicobacter pylori (strain P12).